Consider the following 204-residue polypeptide: Potassium-transporting ATPase KdpC subunit (204 aa).

A helical membrane pass occupies residues 21–41 (AALVIFVGLSLVTGVLYPVVV).

Belongs to the KdpC family. In terms of assembly, the system is composed of three essential subunits: KdpA, KdpB and KdpC.

The protein resides in the cell inner membrane. Its function is as follows. Part of the high-affinity ATP-driven potassium transport (or Kdp) system, which catalyzes the hydrolysis of ATP coupled with the electrogenic transport of potassium into the cytoplasm. This subunit acts as a catalytic chaperone that increases the ATP-binding affinity of the ATP-hydrolyzing subunit KdpB by the formation of a transient KdpB/KdpC/ATP ternary complex. The chain is Potassium-transporting ATPase KdpC subunit from Ralstonia nicotianae (strain ATCC BAA-1114 / GMI1000) (Ralstonia solanacearum).